The following is a 426-amino-acid chain: Mothers against decapentaplegic homolog 7 (426 aa).

The disordered stretch occupies residues 14–40 (WRSRAPGGEDEEEGVGGGGGGGGLRGE). Residues 28 to 39 (VGGGGGGGGLRG) are compositionally biased toward gly residues. 2 positions are modified to N6-acetyllysine; alternate: lysine 64 and lysine 70. Residues lysine 64 and lysine 70 each participate in a glycyl lysine isopeptide (Lys-Gly) (interchain with G-Cter in ubiquitin); alternate cross-link. In terms of domain architecture, MH1 spans 64–207 (KAVRGAKGHH…LSRLCELESP (144 aa)). Residues 67 to 76 (RGAKGHHHPH) are compositionally biased toward basic residues. The disordered stretch occupies residues 67–88 (RGAKGHHHPHPPSSGAGAAGGA). The Zn(2+) site is built by cysteine 125, cysteine 180, cysteine 192, and histidine 197. The PY-motif signature appears at 208–211 (PPPY). The important for interaction with SMURF2 stretch occupies residues 208 to 217 (PPPYSRYPMD). Position 249 is a phosphoserine (serine 249). One can recognise an MH2 domain in the interval 261-426 (WCVVAYWEEK…CWLEVIFNSR (166 aa)).

The protein belongs to the dwarfin/SMAD family. Interacts with COPS5. Interacts with STAMBP. Interacts with NEDD4L. Interacts with RNF111, AXIN1 and AXIN2. Interacts with PPP1R15A. Interacts with ACVR1B, SMURF1, SMURF2 and TGFBR1; SMAD7 recruits SMURF1 and SMURF2 to the TGF-beta receptor and regulates its degradation. Interacts with WWP1. Interacts with PDPK1 (via PH domain). Interacts with TSC22D1/TSC-22; the interaction requires TGF-beta and the interaction is inhibited by TGFBR1. Post-translationally, phosphorylation on Ser-249 does not affect its stability, nuclear localization or inhibitory function in TGFB signaling; however it affects its ability to regulate transcription. Phosphorylated by PDPK1. Ubiquitinated by WWP1. Polyubiquitinated by RNF111, which is enhanced by AXIN1 and promotes proteasomal degradation. In response to TGF-beta, ubiquitinated by SMURF1; which promotes its degradation. In terms of processing, acetylation prevents ubiquitination and degradation mediated by SMURF1. As to expression, ubiquitous.

Its subcellular location is the nucleus. It localises to the cytoplasm. Functionally, antagonist of signaling by TGF-beta (transforming growth factor) type 1 receptor superfamily members; has been shown to inhibit TGF-beta (Transforming growth factor) and activin signaling by associating with their receptors thus preventing SMAD2 access. Functions as an adapter to recruit SMURF2 to the TGF-beta receptor complex. Also acts by recruiting the PPP1R15A-PP1 complex to TGFBR1, which promotes its dephosphorylation. Positively regulates PDPK1 kinase activity by stimulating its dissociation from the 14-3-3 protein YWHAQ which acts as a negative regulator. In Rattus norvegicus (Rat), this protein is Mothers against decapentaplegic homolog 7 (Smad7).